The chain runs to 387 residues: 17-beta-hydroxysteroid dehydrogenase type 2 (387 aa).

A helical; Signal-anchor for type II membrane protein transmembrane segment spans residues 4 to 24; it reads FFSDTAWICLAVPTVLCGTVF. Position 82–111 (82–111) interacts with NAD(+); that stretch reads QKAVLVTGGDCGLGHALCKYLDELGFTVFA. Position 219 (Ser219) interacts with substrate. Residue Tyr232 is part of the active site.

Belongs to the short-chain dehydrogenases/reductases (SDR) family. In terms of assembly, homodimer. As to expression, expressed in placenta.

Its subcellular location is the endoplasmic reticulum membrane. It carries out the reaction 17beta-estradiol + NAD(+) = estrone + NADH + H(+). The enzyme catalyses testosterone + NAD(+) = androst-4-ene-3,17-dione + NADH + H(+). The catalysed reaction is 17beta-hydroxy-5alpha-androstan-3-one + NAD(+) = 5alpha-androstan-3,17-dione + NADH + H(+). It catalyses the reaction (20S)-hydroxypregn-4-en-3-one + NAD(+) = progesterone + NADH + H(+). Its function is as follows. Catalyzes the NAD-dependent oxidation of the highly active 17beta-hydroxysteroids, such as estradiol (E2), testosterone (T), and dihydrotestosterone (DHT), to their less active forms and thus regulates the biological potency of these steroids. Oxidizes estradiol to estrone, testosterone to androstenedione, and dihydrotestosterone to 5alpha-androstan-3,17-dione. Also has 20-alpha-HSD activity. The protein is 17-beta-hydroxysteroid dehydrogenase type 2 of Homo sapiens (Human).